The sequence spans 319 residues: Annexin D4 (319 aa).

Annexin repeat units lie at residues 1–75 (MALP…EFSR) and 86–157 (HPWE…GLVS). Positions 19, 21, and 72 each coordinate Ca(2+). Thr-115 carries the post-translational modification Phosphothreonine. Tyr-159 and Tyr-211 each carry phosphotyrosine. 2 Annexin repeats span residues 169-240 (DSAK…ICLL) and 241-316 (KPAL…TLLS). Ser-277 is modified (phosphoserine). At Tyr-287 the chain carries Phosphotyrosine.

Belongs to the annexin (TC 1.A.31.1) family. In terms of tissue distribution, expressed mainly in roots and flowers. Lower in stems and leaves.

Its function is as follows. May be involved in osmotic stress and abscisic acid signaling in a calcium-dependent manner. The polypeptide is Annexin D4 (ANN4) (Arabidopsis thaliana (Mouse-ear cress)).